Consider the following 286-residue polypeptide: Formamidopyrimidine-DNA glycosylase (286 aa).

P2 acts as the Schiff-base intermediate with DNA in catalysis. E3 acts as the Proton donor in catalysis. Residue K61 is the Proton donor; for beta-elimination activity of the active site. Positions 96, 117, and 160 each coordinate DNA. An FPG-type zinc finger spans residues 246-280 (DAYGREGLPCRRCATPMRRRPWMNRSSYFCPKCQR). R270 acts as the Proton donor; for delta-elimination activity in catalysis.

It belongs to the FPG family. As to quaternary structure, monomer. The cofactor is Zn(2+).

The enzyme catalyses Hydrolysis of DNA containing ring-opened 7-methylguanine residues, releasing 2,6-diamino-4-hydroxy-5-(N-methyl)formamidopyrimidine.. It carries out the reaction 2'-deoxyribonucleotide-(2'-deoxyribose 5'-phosphate)-2'-deoxyribonucleotide-DNA = a 3'-end 2'-deoxyribonucleotide-(2,3-dehydro-2,3-deoxyribose 5'-phosphate)-DNA + a 5'-end 5'-phospho-2'-deoxyribonucleoside-DNA + H(+). In terms of biological role, involved in base excision repair of DNA damaged by oxidation or by mutagenic agents. Acts as a DNA glycosylase that recognizes and removes damaged bases. Has a preference for oxidized purines, such as 7,8-dihydro-8-oxoguanine (8-oxoG). Has AP (apurinic/apyrimidinic) lyase activity and introduces nicks in the DNA strand. Cleaves the DNA backbone by beta-delta elimination to generate a single-strand break at the site of the removed base with both 3'- and 5'-phosphates. This is Formamidopyrimidine-DNA glycosylase from Streptomyces avermitilis (strain ATCC 31267 / DSM 46492 / JCM 5070 / NBRC 14893 / NCIMB 12804 / NRRL 8165 / MA-4680).